The chain runs to 453 residues: Elongation factor 1-alpha (453 aa).

The tr-type G domain occupies 5–230 (KTHINIVVIG…DAIVEPKRPH (226 aa)). Residues 14–21 (GHVDAGKS) form a G1 region. Position 14-21 (14-21 (GHVDAGKS)) interacts with GTP. Residues 70-74 (GITID) form a G2 region. A G3 region spans residues 91-94 (DAPG). Residues 91-95 (DAPGH) and 153-156 (NKMD) contribute to the GTP site. The tract at residues 153-156 (NKMD) is G4. Residues 194–196 (SGW) form a G5 region.

This sequence belongs to the TRAFAC class translation factor GTPase superfamily. Classic translation factor GTPase family. EF-Tu/EF-1A subfamily. Binds to actin.

It is found in the cytoplasm. Functionally, this protein promotes the GTP-dependent binding of aminoacyl-tRNA to the A-site of ribosomes during protein biosynthesis. It is also an abundant actin filament bundling protein. The polypeptide is Elongation factor 1-alpha (eef1a2) (Dictyostelium discoideum (Social amoeba)).